Reading from the N-terminus, the 394-residue chain is Phosphopentomutase (394 aa).

Positions 10, 282, 287, 323, 324, and 335 each coordinate Mn(2+).

The protein belongs to the phosphopentomutase family. Mn(2+) serves as cofactor.

The protein resides in the cytoplasm. It carries out the reaction 2-deoxy-alpha-D-ribose 1-phosphate = 2-deoxy-D-ribose 5-phosphate. The catalysed reaction is alpha-D-ribose 1-phosphate = D-ribose 5-phosphate. Its pathway is carbohydrate degradation; 2-deoxy-D-ribose 1-phosphate degradation; D-glyceraldehyde 3-phosphate and acetaldehyde from 2-deoxy-alpha-D-ribose 1-phosphate: step 1/2. Isomerase that catalyzes the conversion of deoxy-ribose 1-phosphate (dRib-1-P) and ribose 1-phosphate (Rib-1-P) to deoxy-ribose 5-phosphate (dRib-5-P) and ribose 5-phosphate (Rib-5-P), respectively. This is Phosphopentomutase from Dictyoglomus turgidum (strain DSM 6724 / Z-1310).